The following is a 476-amino-acid chain: Protein transport protein Sec61 subunit alpha (476 aa).

Residues 2 to 33 (GIKFLEVIKPFCAVLPEIQKPERKIQFREKVL) are Cytoplasmic-facing. The chain crosses the membrane as a helical span at residues 34–53 (WTAITLFIFLVCCQIPLFGI). At 54 to 76 (MSSDSADPFYWMRVILASNRGTL) the chain is on the lumenal side. Residues 77-96 (MELGISPIVTSGLIMQLLAG) traverse the membrane as a helical segment. Topologically, residues 97–117 (AKIIEVGDTPKDRALFNGAQK) are cytoplasmic. Residues 118-138 (LFGMIITIGQAIVYVMTGMYG) traverse the membrane as a helical segment. Over 139-144 (DPSEMG) the chain is Lumenal. Residues 145-165 (AGICLLIIIQLFVAGLIVLLL) traverse the membrane as a helical segment. At 166-172 (DELLQKG) the chain is on the cytoplasmic side. The chain crosses the membrane as a helical span at residues 173 to 193 (YGLGSGISLFIATNICETIVW). Over 194–240 (KAFSPTTVNTGRGTEFEGAIIALFHLLATRTDKVRALREAFYRQNLP) the chain is Lumenal. The helical transmembrane segment at 241 to 261 (NILNLIATVFVFAVVIYFQGF) threads the bilayer. The Cytoplasmic portion of the chain corresponds to 262–288 (RVDLPIKSARYRGQYNTYPIKLFYTSN). The chain crosses the membrane as a helical span at residues 289–309 (IPIILQSALVSNLYVISQMLS). Topologically, residues 310-354 (TRFSGNFLVNLLGTWSDATSGGPARAYPVAGLCYYLSPPESFGSV) are lumenal. The chain crosses the membrane as a helical span at residues 355–375 (LDDPVHAAIYIVFMLGSCAFF). Residues 376–420 (SKTWIEVSGSSAKDVAKQLKEQQMVMRGHRETSMVHELNRYIPTA) are Cytoplasmic-facing. The helical transmembrane segment at 421 to 441 (AAFGGLCIGGLSVMADFLGAI) threads the bilayer. Residues 442-445 (GSGT) lie on the Lumenal side of the membrane. Residues 446–462 (GILLAVTIIYQYFEIFV) traverse the membrane as a helical segment. Residues 463-476 (KEQSEMGSMGALLF) lie on the Cytoplasmic side of the membrane.

It belongs to the SecY/SEC61-alpha family. The SEC61 channel-forming translocon complex consists of channel-forming core components SEC61A1, SEC61B and SEC61G and different auxiliary components such as SEC62 and SEC63. The SEC61 channel associates with the multi-pass translocon (MPT) complex.

The protein localises to the endoplasmic reticulum membrane. Component of SEC61 channel-forming translocon complex that mediates transport of signal peptide-containing precursor polypeptides across the endoplasmic reticulum (ER). Forms a ribosome receptor and a gated pore in the ER membrane, both functions required for cotranslational translocation of nascent polypeptides. May cooperate with auxiliary protein SEC62, SEC63 and HSPA5/BiP to enable post-translational transport of small presecretory proteins. The SEC61 channel is also involved in ER membrane insertion of transmembrane proteins: it mediates membrane insertion of the first few transmembrane segments of proteins, while insertion of subsequent transmembrane regions of multi-pass membrane proteins is mediated by the multi-pass translocon (MPT) complex. This chain is Protein transport protein Sec61 subunit alpha (sec61a), found in Dissostichus mawsoni (Antarctic cod).